The primary structure comprises 148 residues: Histone H2B.1 (148 aa).

Positions 1 to 35 (MAPRAEKKPAEKKTAAERPVEENKAAEKAPAEKKP) are enriched in basic and acidic residues. Positions 1–56 (MAPRAEKKPAEKKTAAERPVEENKAAEKAPAEKKPKAGKKLPPKEAGDKKKKRSKK) are disordered. At Ala-2 the chain carries N,N,N-trimethylalanine; alternate. Residue Ala-2 is modified to N,N-dimethylalanine; alternate. Ala-2 bears the N-methylalanine; alternate mark. Lys-7 bears the N6-acetyllysine; partial mark. An N6-acetyllysine modification is found at Lys-12. The residue at position 13 (Lys-13) is an N6,N6-dimethyllysine. An N6-acetyllysine mark is found at Lys-28, Lys-33, and Lys-39. Lys-40 is modified (N6-acetyllysine; partial). Lys-144 is covalently cross-linked (Glycyl lysine isopeptide (Lys-Gly) (interchain with G-Cter in ubiquitin)).

Belongs to the histone H2B family. The nucleosome is a histone octamer containing two molecules each of H2A, H2B, H3 and H4 assembled in one H3-H4 heterotetramer and two H2A-H2B heterodimers. The octamer wraps approximately 147 bp of DNA. Interacts with AHL27. In terms of processing, can be acetylated to form H2BK6ac, H2BK33ac and H2BK34ac. Mono-, di- or trimethylated at the N-terminus to form H2BA1me1/2/3. H2BA1me2 may be acetylated to form H2BA1me2K6ac. Post-translationally, monoubiquitinated by BRE1 to form H2BK143ub1 and deubiquitinated by UBP26. Required for heterochromatic histone H3 di- and trimethylation at H3K4me. May give a specific tag for epigenetic transcriptional activation.

The protein localises to the nucleus. It localises to the chromosome. Its function is as follows. Core component of nucleosome. Nucleosomes wrap and compact DNA into chromatin, limiting DNA accessibility to the cellular machineries which require DNA as a template. Histones thereby play a central role in transcription regulation, DNA repair, DNA replication and chromosomal stability. DNA accessibility is regulated via a complex set of post-translational modifications of histones, also called histone code, and nucleosome remodeling. The polypeptide is Histone H2B.1 (Arabidopsis thaliana (Mouse-ear cress)).